A 288-amino-acid polypeptide reads, in one-letter code: Orotidine 5'-phosphate decarboxylase (288 aa).

Catalysis depends on lysine 99, which acts as the Proton donor.

Belongs to the OMP decarboxylase family. Type 2 subfamily.

It carries out the reaction orotidine 5'-phosphate + H(+) = UMP + CO2. The protein operates within pyrimidine metabolism; UMP biosynthesis via de novo pathway; UMP from orotate: step 2/2. The polypeptide is Orotidine 5'-phosphate decarboxylase (pyrF) (Myxococcus xanthus (strain DK1622)).